A 637-amino-acid chain; its full sequence is Biosynthetic arginine decarboxylase (637 aa).

An N6-(pyridoxal phosphate)lysine modification is found at K107. 289 to 299 (LDVGGGLGVDY) is a binding site for substrate.

This sequence belongs to the Orn/Lys/Arg decarboxylase class-II family. SpeA subfamily. The cofactor is Mg(2+). Pyridoxal 5'-phosphate serves as cofactor.

It carries out the reaction L-arginine + H(+) = agmatine + CO2. Catalyzes the biosynthesis of agmatine from arginine. This Thermosynechococcus vestitus (strain NIES-2133 / IAM M-273 / BP-1) protein is Biosynthetic arginine decarboxylase.